The following is a 655-amino-acid chain: Broad substrate specificity ATP-binding cassette transporter ABCG2 (655 aa).

At methionine 1–serine 395 the chain is on the cytoplasmic side. Residues leucine 37–alanine 286 enclose the ABC transporter domain. Residues glycine 80–serine 87, arginine 184–glutamate 190, glutamate 211, and histidine 243 each bind ATP. The residue at position 362 (threonine 362) is a Phosphothreonine; by PIM1. In terms of domain architecture, ABC transmembrane type-2 spans leucine 389–leucine 651. The chain crosses the membrane as a helical span at residues isoleucine 396–leucine 416. Topologically, residues lysine 417–glycine 428 are extracellular. Residues valine 429–valine 449 form a helical membrane-spanning segment. Residues valine 450–aspartate 477 lie on the Cytoplasmic side of the membrane. A helical membrane pass occupies residues leucine 478–glycine 498. The Extracellular portion of the chain corresponds to leucine 499 to phenylalanine 506. Residues phenylalanine 507–isoleucine 527 traverse the membrane as a helical segment. Residues alanine 528 to serine 535 lie on the Cytoplasmic side of the membrane. Residues valine 536–valine 556 form a helical membrane-spanning segment. Residues asparagine 557–histidine 630 lie on the Extracellular side of the membrane. A disulfide bond links cysteine 592 and cysteine 608. A glycan (N-linked (GlcNAc...) asparagine) is linked at asparagine 596. Residues valine 631 to leucine 651 traverse the membrane as a helical segment. Topologically, residues lysine 652 to serine 655 are cytoplasmic.

It belongs to the ABC transporter superfamily. ABCG family. Eye pigment precursor importer (TC 3.A.1.204) subfamily. In terms of assembly, homodimer; disulfide-linked. The minimal functional unit is a homodimer, but the major oligomeric form in plasma membrane is a homotetramer with possibility of higher order oligomerization up to homododecamers. N-glycosylated. Glycosylation-deficient ABCG2 is normally expressed and functional. In terms of processing, phosphorylated. Phosphorylation at Thr-362 by PIM1 is induced by drugs like mitoxantrone and is associated with cells increased drug resistance. It regulates the localization to the plasma membrane, the homooligomerization and therefore, the activity of the transporter. As to expression, highly expressed in placenta. Low expression in small intestine, liver and colon. Expressed in brain (at protein level).

It localises to the cell membrane. The protein localises to the apical cell membrane. The protein resides in the mitochondrion membrane. The enzyme catalyses ATP + H2O + xenobioticSide 1 = ADP + phosphate + xenobioticSide 2.. The catalysed reaction is urate(in) + ATP + H2O = urate(out) + ADP + phosphate + H(+). It carries out the reaction indoxyl sulfate(in) + ATP + H2O = indoxyl sulfate(out) + ADP + phosphate + H(+). It catalyses the reaction sphing-4-enine 1-phosphate(in) + ATP + H2O = sphing-4-enine 1-phosphate(out) + ADP + phosphate + H(+). The enzyme catalyses estrone 3-sulfate(in) + ATP + H2O = estrone 3-sulfate(out) + ADP + phosphate + H(+). The catalysed reaction is dehydroepiandrosterone 3-sulfate(in) + ATP + H2O = dehydroepiandrosterone 3-sulfate(out) + ADP + phosphate + H(+). It carries out the reaction 4-methylumbelliferone sulfate(in) + ATP + H2O = 4-methylumbelliferone sulfate(out) + ADP + phosphate + H(+). It catalyses the reaction 5,7-dimethyl-2-methylamino-4-(3-pyridylmethyl)-1,3-benzothiazol-6-yl beta-D-glucuronate(in) + ATP + H2O = 5,7-dimethyl-2-methylamino-4-(3-pyridylmethyl)-1,3-benzothiazol-6-yl beta-D-glucuronate(out) + ADP + phosphate + H(+). The enzyme catalyses 4-methylumbelliferone beta-D-glucuronate(in) + ATP + H2O = 4-methylumbelliferone beta-D-glucuronate(out) + ADP + phosphate + H(+). The catalysed reaction is 5,7-dimethyl-2-methylamino-4-(3-pyridylmethyl)-1,3-benzothiazol-6-yl sulfate(in) + ATP + H2O = 5,7-dimethyl-2-methylamino-4-(3-pyridylmethyl)-1,3-benzothiazol-6-yl sulfate(out) + ADP + phosphate + H(+). It carries out the reaction 17beta-estradiol 17-O-(beta-D-glucuronate)(in) + ATP + H2O = 17beta-estradiol 17-O-(beta-D-glucuronate)(out) + ADP + phosphate + H(+). It catalyses the reaction methotrexate(in) + ATP + H2O = methotrexate(out) + ADP + phosphate + H(+). The enzyme catalyses riboflavin(in) + ATP + H2O = riboflavin(out) + ADP + phosphate + H(+). The catalysed reaction is pheophorbide a(in) + ATP + H2O = pheophorbide a(out) + ADP + phosphate + H(+). It carries out the reaction itaconate(in) + ATP + H2O = itaconate(out) + ADP + phosphate + H(+). Its activity is regulated as follows. Specifically inhibited by the fungal toxin fumitremorgin C and Ko143. Functionally, broad substrate specificity ATP-dependent transporter of the ATP-binding cassette (ABC) family that actively extrudes a wide variety of physiological compounds, dietary toxins and xenobiotics from cells. Involved in porphyrin homeostasis, mediating the export of protoporphyrin IX (PPIX) from both mitochondria to cytosol and cytosol to extracellular space, it also functions in the cellular export of heme. Also mediates the efflux of sphingosine-1-P from cells. Acts as a urate exporter functioning in both renal and extrarenal urate excretion. In kidney, it also functions as a physiological exporter of the uremic toxin indoxyl sulfate. Also involved in the excretion of steroids like estrone 3-sulfate/E1S, 3beta-sulfooxy-androst-5-en-17-one/DHEAS, and other sulfate conjugates. Mediates the secretion of the riboflavin and biotin vitamins into milk. Extrudes pheophorbide a, a phototoxic porphyrin catabolite of chlorophyll, reducing its bioavailability. Plays an important role in the exclusion of xenobiotics from the brain. It confers to cells a resistance to multiple drugs and other xenobiotics including mitoxantrone, pheophorbide, camptothecin, methotrexate, azidothymidine, and the anthracyclines daunorubicin and doxorubicin, through the control of their efflux. In placenta, it limits the penetration of drugs from the maternal plasma into the fetus. May play a role in early stem cell self-renewal by blocking differentiation. In inflammatory macrophages, exports itaconate from the cytosol to the extracellular compartment and limits the activation of TFEB-dependent lysosome biogenesis involved in antibacterial innate immune response. This is Broad substrate specificity ATP-binding cassette transporter ABCG2 (ABCG2) from Homo sapiens (Human).